Reading from the N-terminus, the 373-residue chain is Zinc finger CCCH domain-containing protein 15 homolog (373 aa).

The tract at residues 1–27 (MPPKQAQSKKTVEKEKKKKVEDKTFGL) is disordered. A compositionally biased stretch (basic and acidic residues) spans 10–25 (KTVEKEKKKKVEDKTF). 2 consecutive C3H1-type zinc fingers follow at residues 95–123 (DPKS…HDLA) and 167–205 (KPTA…HCLP). Positions 252-326 (KEEKRLQKEK…ALANQINTSL (75 aa)) form a coiled coil. The tract at residues 325 to 373 (SLFTDGGVLPSDDDDDDDDDDDDDEDGDDEEEDDDEEEGEYEEEEASDE) is disordered. Positions 335–373 (SDDDDDDDDDDDDDEDGDDEEEDDDEEEGEYEEEEASDE) are enriched in acidic residues.

This sequence belongs to the ZC3H15/TMA46 family.

The protein is Zinc finger CCCH domain-containing protein 15 homolog of Dictyostelium discoideum (Social amoeba).